The primary structure comprises 724 residues: Catalase-peroxidase (724 aa).

Residues 1 to 20 (MDENKTKPAGKCPVMHGGNT) form a disordered region. Residues 98–225 (WHSAGTYRTA…LAAVQMGLIY (128 aa)) constitute a cross-link (tryptophyl-tyrosyl-methioninium (Trp-Tyr) (with M-251)). The Proton acceptor role is filled by His99. Positions 225–251 (YVNPEGVDGNPDPLRTAQDMRVTFSRM) form a cross-link, tryptophyl-tyrosyl-methioninium (Tyr-Met) (with W-98). A heme b-binding site is contributed by His266.

The protein belongs to the peroxidase family. Peroxidase/catalase subfamily. In terms of assembly, homodimer or homotetramer. Requires heme b as cofactor. In terms of processing, formation of the three residue Trp-Tyr-Met cross-link is important for the catalase, but not the peroxidase activity of the enzyme.

It catalyses the reaction H2O2 + AH2 = A + 2 H2O. It carries out the reaction 2 H2O2 = O2 + 2 H2O. In terms of biological role, bifunctional enzyme with both catalase and broad-spectrum peroxidase activity. The chain is Catalase-peroxidase from Pectobacterium carotovorum subsp. carotovorum (strain PC1).